The chain runs to 290 residues: 4-hydroxybenzoate octaprenyltransferase (290 aa).

The next 8 membrane-spanning stretches (helical) occupy residues 23–43, 46–66, 99–119, 141–161, 163–183, 212–232, 233–253, and 268–288; these read IGALLLLWPTLWALWVATPGM, LWILAVFVAGVWLMRAAGCVV, LFVVLVLLAFLLVLTLNAMTI, LPQVVLGAAFGWSIPMAFAAV, ESLPLSCWLMFLANILWAVAY, TLIIGILQLGVMALMALIGWL, NGLGGGYYWAVLVAGALFVYQ, and AFMNNNYVGLVLFLGLAMSYW.

The protein belongs to the UbiA prenyltransferase family. Requires Mg(2+) as cofactor.

Its subcellular location is the cell inner membrane. It carries out the reaction all-trans-octaprenyl diphosphate + 4-hydroxybenzoate = 4-hydroxy-3-(all-trans-octaprenyl)benzoate + diphosphate. It participates in cofactor biosynthesis; ubiquinone biosynthesis. In terms of biological role, catalyzes the prenylation of para-hydroxybenzoate (PHB) with an all-trans polyprenyl group. Mediates the second step in the final reaction sequence of ubiquinone-8 (UQ-8) biosynthesis, which is the condensation of the polyisoprenoid side chain with PHB, generating the first membrane-bound Q intermediate 3-octaprenyl-4-hydroxybenzoate. This Salmonella paratyphi C (strain RKS4594) protein is 4-hydroxybenzoate octaprenyltransferase.